The primary structure comprises 126 residues: MNQPANQFNPSSSQPVDPTVLNLTDSAAQKVRRLREEEGDSNLMLRVYVTGGGCSGFSYGFNFANELNEDDANFDNNDVTLVVDSLSYQYLQGSTVDYTEGLEGARFIVTNPNATTTCGCGSSFSI.

Residues 1–21 (MNQPANQFNPSSSQPVDPTVL) form a disordered region. Residues Cys-54, Cys-118, and Cys-120 each coordinate iron-sulfur cluster.

This sequence belongs to the HesB/IscA family. In terms of assembly, homodimer. Iron-sulfur cluster serves as cofactor.

Functionally, required for insertion of 4Fe-4S clusters for at least IspG. The chain is Iron-sulfur cluster insertion protein ErpA from Psychrobacter arcticus (strain DSM 17307 / VKM B-2377 / 273-4).